The following is a 32-amino-acid chain: Delta-conotoxin-like CnVID (32 aa).

Disulfide bonds link Cys-3–Cys-18, Cys-10–Cys-22, and Cys-17–Cys-27. Pro-6 and Pro-14 each carry 4-hydroxyproline.

Belongs to the conotoxin O1 superfamily. As to expression, expressed by the venom duct.

It localises to the secreted. Delta-conotoxins bind to site 6 of voltage-gated sodium channels (Nav) and inhibit the inactivation process. This toxin acts on Nav1.2/SCN2A, Nav1.3/SCN3A and Nav1.6/SCN8A (EC(50)=1.7 uM). The sequence is that of Delta-conotoxin-like CnVID from Conus consors (Singed cone).